A 177-amino-acid polypeptide reads, in one-letter code: Inorganic pyrophosphatase (177 aa).

Residues K34, R48, and Y60 each coordinate substrate. Positions 70, 75, and 107 each coordinate Mg(2+). Y144 contributes to the substrate binding site.

This sequence belongs to the PPase family. In terms of assembly, homohexamer. It depends on Mg(2+) as a cofactor.

It is found in the cytoplasm. It catalyses the reaction diphosphate + H2O = 2 phosphate + H(+). Functionally, catalyzes the hydrolysis of inorganic pyrophosphate (PPi) forming two phosphate ions. The sequence is that of Inorganic pyrophosphatase from Picrophilus torridus (strain ATCC 700027 / DSM 9790 / JCM 10055 / NBRC 100828 / KAW 2/3).